Reading from the N-terminus, the 158-residue chain is 6,7-dimethyl-8-ribityllumazine synthase (158 aa).

5-amino-6-(D-ribitylamino)uracil-binding positions include Phe23, 61–63 (SFE), and 85–87 (AVI). Residue 90-91 (ET) participates in (2S)-2-hydroxy-3-oxobutyl phosphate binding. Residue His93 is the Proton donor of the active site. A 5-amino-6-(D-ribitylamino)uracil-binding site is contributed by Phe118. A (2S)-2-hydroxy-3-oxobutyl phosphate-binding site is contributed by Arg132.

It belongs to the DMRL synthase family.

It carries out the reaction (2S)-2-hydroxy-3-oxobutyl phosphate + 5-amino-6-(D-ribitylamino)uracil = 6,7-dimethyl-8-(1-D-ribityl)lumazine + phosphate + 2 H2O + H(+). It participates in cofactor biosynthesis; riboflavin biosynthesis; riboflavin from 2-hydroxy-3-oxobutyl phosphate and 5-amino-6-(D-ribitylamino)uracil: step 1/2. Functionally, catalyzes the formation of 6,7-dimethyl-8-ribityllumazine by condensation of 5-amino-6-(D-ribitylamino)uracil with 3,4-dihydroxy-2-butanone 4-phosphate. This is the penultimate step in the biosynthesis of riboflavin. The sequence is that of 6,7-dimethyl-8-ribityllumazine synthase from Prochlorococcus marinus subsp. pastoris (strain CCMP1986 / NIES-2087 / MED4).